Reading from the N-terminus, the 105-residue chain is UPF0235 protein Mchl_2407 (105 aa).

This sequence belongs to the UPF0235 family.

The sequence is that of UPF0235 protein Mchl_2407 from Methylorubrum extorquens (strain CM4 / NCIMB 13688) (Methylobacterium extorquens).